The sequence spans 885 residues: Conidiophore development regulator abaA (885 aa).

The span at M1–P20 shows a compositional bias: polar residues. Residues M1 to T25 are disordered. The segment at residues Q124–L217 is a DNA-binding region (TEA). Disordered regions lie at residues K502 to R539 and A817 to W885. Basic and acidic residues-rich tracts occupy residues Y508–G521 and V831–G840.

Belongs to the TEC1 family.

It localises to the nucleus. Functionally, brlA, abaA and wetA are pivotal regulators of conidiophore development and conidium maturation. They act individually and together to regulate their own expression and that of numerous other sporulation-specific genes. BrlA, abaA and wetA act together to positively regulate the expression of the Pks1 gene cluster that mediates the biosynthesis of an anthraquinone derivative pigment that contributes to conidial pigmentation that provides protection from UV radiation, heat and cold stress. In Metarhizium robertsii (strain ARSEF 23 / ATCC MYA-3075) (Metarhizium anisopliae (strain ARSEF 23)), this protein is Conidiophore development regulator abaA.